We begin with the raw amino-acid sequence, 698 residues long: Elongation factor G (698 aa).

Positions 10–285 (ASTRNIGIMA…AVVDFLPNPL (276 aa)) constitute a tr-type G domain. Residues 19 to 26 (AHIDAGKT), 83 to 87 (DTPGH), and 137 to 140 (NKMD) each bind GTP.

This sequence belongs to the TRAFAC class translation factor GTPase superfamily. Classic translation factor GTPase family. EF-G/EF-2 subfamily.

It is found in the cytoplasm. Functionally, catalyzes the GTP-dependent ribosomal translocation step during translation elongation. During this step, the ribosome changes from the pre-translocational (PRE) to the post-translocational (POST) state as the newly formed A-site-bound peptidyl-tRNA and P-site-bound deacylated tRNA move to the P and E sites, respectively. Catalyzes the coordinated movement of the two tRNA molecules, the mRNA and conformational changes in the ribosome. This chain is Elongation factor G, found in Frankia alni (strain DSM 45986 / CECT 9034 / ACN14a).